The following is a 168-amino-acid chain: Protein-export protein SecB (168 aa).

The segment at 1–20 (MTDETAANGENEAGRQSQSS) is disordered.

This sequence belongs to the SecB family. In terms of assembly, homotetramer, a dimer of dimers. One homotetramer interacts with 1 SecA dimer.

The protein localises to the cytoplasm. Functionally, one of the proteins required for the normal export of preproteins out of the cell cytoplasm. It is a molecular chaperone that binds to a subset of precursor proteins, maintaining them in a translocation-competent state. It also specifically binds to its receptor SecA. This Rhodospirillum centenum (strain ATCC 51521 / SW) protein is Protein-export protein SecB.